A 350-amino-acid chain; its full sequence is Biotin synthase (350 aa).

The 228-residue stretch at 41–268 (NEVQISRLLS…LSRVRLSAGR (228 aa)) folds into the Radical SAM core domain. 3 residues coordinate [4Fe-4S] cluster: cysteine 56, cysteine 60, and cysteine 63. Residues cysteine 100, cysteine 131, cysteine 191, and arginine 263 each contribute to the [2Fe-2S] cluster site.

The protein belongs to the radical SAM superfamily. Biotin synthase family. Homodimer. [4Fe-4S] cluster is required as a cofactor. Requires [2Fe-2S] cluster as cofactor.

It carries out the reaction (4R,5S)-dethiobiotin + (sulfur carrier)-SH + 2 reduced [2Fe-2S]-[ferredoxin] + 2 S-adenosyl-L-methionine = (sulfur carrier)-H + biotin + 2 5'-deoxyadenosine + 2 L-methionine + 2 oxidized [2Fe-2S]-[ferredoxin]. It participates in cofactor biosynthesis; biotin biosynthesis; biotin from 7,8-diaminononanoate: step 2/2. Functionally, catalyzes the conversion of dethiobiotin (DTB) to biotin by the insertion of a sulfur atom into dethiobiotin via a radical-based mechanism. This is Biotin synthase from Shewanella putrefaciens (strain CN-32 / ATCC BAA-453).